A 91-amino-acid chain; its full sequence is Sm-like protein LSM6A (91 aa).

In terms of domain architecture, Sm spans 14–86 (TPADFLKSIR…VLYISTVNMT (73 aa)).

The protein belongs to the snRNP Sm proteins family. Component of the heptameric LSM1-LSM7 complex that forms a seven-membered ring structure with a donut shape. The LSM subunits are arranged in the order LSM1, LSM2, LSM3, LSM6, LSM5, LSM7 and LSM4. Component of the heptameric LSM2-LSM8 complex that forms a seven-membered ring structure with a donut shape. The LSM subunits are arranged in the order LSM8, LSM2, LSM3, LSM6, LSM5, LSM7 and LSM4. LSM6A subunit interacts only with its two neighboring subunits, LSM3A or LSM3B and LSM5. Expressed in roots, leaves, stems, flowers and siliques.

Its subcellular location is the cytoplasm. The protein localises to the nucleus. In terms of biological role, component of LSM protein complexes, which are involved in RNA processing. Component of the cytoplasmic LSM1-LSM7 complex which is involved in mRNA degradation by promoting decapping and leading to accurate 5'-3' mRNA decay. The cytoplasmic LSM1-LSM7 complex regulates developmental gene expression by the decapping of specific development-related transcripts. Component of the nuclear LSM2-LSM8 complex which is involved splicing nuclear mRNAs. LSM2-LSM8 binds directly to the U6 small nuclear RNAs (snRNAs) and is essential for accurate splicing of selected development-related mRNAs through the stabilization of the spliceosomal U6 snRNA. Plays a critical role in the regulation of development-related gene expression. In Arabidopsis thaliana (Mouse-ear cress), this protein is Sm-like protein LSM6A.